The chain runs to 181 residues: Inner membrane-spanning protein YciB (181 aa).

A run of 5 helical transmembrane segments spans residues 10–30 (LIIF…GALI), 50–70 (MHLI…VFHD), 72–92 (AFIK…LGVS), 118–138 (VTWY…YVAF), and 148–168 (FKVF…VFYL).

This sequence belongs to the YciB family.

Its subcellular location is the cell inner membrane. Plays a role in cell envelope biogenesis, maintenance of cell envelope integrity and membrane homeostasis. The polypeptide is Inner membrane-spanning protein YciB (Shewanella sp. (strain MR-7)).